The chain runs to 449 residues: Glucose-6-phosphate isomerase (449 aa).

Glu291 functions as the Proton donor in the catalytic mechanism. Residues His312 and Lys426 contribute to the active site.

This sequence belongs to the GPI family.

It localises to the cytoplasm. It catalyses the reaction alpha-D-glucose 6-phosphate = beta-D-fructose 6-phosphate. It participates in carbohydrate biosynthesis; gluconeogenesis. Its pathway is carbohydrate degradation; glycolysis; D-glyceraldehyde 3-phosphate and glycerone phosphate from D-glucose: step 2/4. In terms of biological role, catalyzes the reversible isomerization of glucose-6-phosphate to fructose-6-phosphate. This is Glucose-6-phosphate isomerase from Streptococcus gordonii (strain Challis / ATCC 35105 / BCRC 15272 / CH1 / DL1 / V288).